The sequence spans 108 residues: UPF0251 protein PF0620 (108 aa).

This sequence belongs to the UPF0251 family.

The protein is UPF0251 protein PF0620 of Pyrococcus furiosus (strain ATCC 43587 / DSM 3638 / JCM 8422 / Vc1).